The sequence spans 620 residues: Glutathione-regulated potassium-efflux system protein KefC (620 aa).

The next 12 membrane-spanning stretches (helical) occupy residues 4–24, 26–46, 54–74, 90–110, 114–134, 149–169, 178–198, 218–238, 270–290, 294–314, 327–347, and 359–379; these read HTLI…PIAV, LGLG…PWGL, SILH…GLEL, GALQ…LLGL, VAEL…MQAM, FAVL…IPLL, MGAF…VVLL, VFSA…EEVG, GLLL…GTLL, LRIV…LWLI, WFAV…GAAQ, and SLTL…VILN. The RCK N-terminal domain occupies 399–518; sequence QPRVIIAGFG…AGVEKPERET (120 aa). Positions 597–620 are disordered; the sequence is GWQGTEEGKHTGNMADEPETKPSS.

This sequence belongs to the monovalent cation:proton antiporter 2 (CPA2) transporter (TC 2.A.37) family. KefC subfamily. In terms of assembly, homodimer. Interacts with the regulatory subunit KefF.

The protein localises to the cell inner membrane. Functionally, pore-forming subunit of a potassium efflux system that confers protection against electrophiles. Catalyzes K(+)/H(+) antiport. The chain is Glutathione-regulated potassium-efflux system protein KefC from Escherichia coli (strain K12 / MC4100 / BW2952).